The sequence spans 209 residues: Uracil phosphoribosyltransferase (209 aa).

5-phospho-alpha-D-ribose 1-diphosphate is bound by residues Arg-79, Arg-104, and 131-139 (DPMLATGGS). Uracil-binding positions include Ile-194 and 199–201 (GDA). Asp-200 is a 5-phospho-alpha-D-ribose 1-diphosphate binding site.

It belongs to the UPRTase family. It depends on Mg(2+) as a cofactor.

The enzyme catalyses UMP + diphosphate = 5-phospho-alpha-D-ribose 1-diphosphate + uracil. It participates in pyrimidine metabolism; UMP biosynthesis via salvage pathway; UMP from uracil: step 1/1. Its activity is regulated as follows. Allosterically activated by GTP. In terms of biological role, catalyzes the conversion of uracil and 5-phospho-alpha-D-ribose 1-diphosphate (PRPP) to UMP and diphosphate. The polypeptide is Uracil phosphoribosyltransferase (Streptococcus suis (strain 05ZYH33)).